A 1099-amino-acid chain; its full sequence is MRSEGAAPRRAARYGALSLVLATLLGQVTESRGVMDNIQRFSSLPPYLPVSFHVLRAETAFFLKEANPDPLRNASLQSRVESFFIYKAQQPPVLNVSYGPYSAEKVIPLDLMLNPNFLGPTSKFPFDWRLKAYILQEKVYLSHPKVQVLFHIVGRDWDDHRDEKLPCLRVFAFRDSREVRGSCRLGGPLGLCVAQLEMLPGWFSPPAVVSGRRRPAERPEGSPVELYYAVQPGDERGDCTGGDTRKDNAIRPGKDGQEGRTSHLQKIGTISLYRAQDSNQLSELRLDGNVVIWLPSQPVKQGDIVTASVTIANNSTVDHFILRAKVKKGVNILTVQTSEPRQWDVRQEVGNGGKHTTTSVACQRLGPGARNRSSNLFSEVMQMNFEIASFSSLSGTQPITWQVEYPRKGATDIAVSEIFISQKDLVAIVPLAMDTELLNTAILTGKTVAMPVRVVSVEENSTLRDISELVECKATDENVIKVSDHCDYVFVNGKEIKGKMDSVVNFTYQHLSAPLHVTVWVPRLPLQIEVSDTELSQVKGWRVPIVASKRPTRDSEEEEEEEQKGRGCTLQFQHATVRVLTQFVSEGAGPWGQLSHLLSPDWQFDITHLVADFMKLESPHIATLQDSRVLVGREVGMTTIQVLSPLSDSILAEKTVTVLDDKVSVTDLAVQVVAGLSVTLHPISENNKATSAVAMAEELLRAPKKEAIISTWLQFSDGSVTPLDIYDSKDFSLTAISLDEAVVSIPQPLSPWWPTVVAEGEGQGPLLRVDMSIAEACQKSKRKSVLAVGIGHVGVKFGWDDADSSQTGEKDEEEIKNHASDRRQKIQDLERPGQDELYHGNFPGDREEGALSATTTTKSLLDNNVGKSGRRDGARLHSIPIDFTNFPAHVDLPKAKTRGTLEENGLMQTAHGLSDLEIGMYALLGVFCLAILVFLINCATFAFKYRHKQVPLEGQASMTHSHDWVWLGNEAELLENIGDLSPPQDEHTTIIDRGLGGCEENNHLLLNGGSQKPTQSQVHRPPGSGGRQTREPRQEPANSPTSKMKKVKFATFTIPPEESCPTVNSILSGEDDIKWVCQDLDVGAPKELRTYLEKFQDSV.

An N-terminal signal peptide occupies residues 1-31 (MRSEGAAPRRAARYGALSLVLATLLGQVTES). Residues 32–915 (RGVMDNIQRF…LMQTAHGLSD (884 aa)) are Extracellular-facing. The N-linked (GlcNAc...) asparagine glycan is linked to Asn-95. Residues 237 to 260 (GDCTGGDTRKDNAIRPGKDGQEGR) form a disordered region. N-linked (GlcNAc...) asparagine glycosylation is found at Asn-314 and Asn-371. Positions 801–872 (DADSSQTGEK…NNVGKSGRRD (72 aa)) are disordered. Residues 813 to 849 (EEIKNHASDRRQKIQDLERPGQDELYHGNFPGDREEG) show a composition bias toward basic and acidic residues. Residues 916–936 (LEIGMYALLGVFCLAILVFLI) traverse the membrane as a helical segment. The Cytoplasmic portion of the chain corresponds to 937–1099 (NCATFAFKYR…TYLEKFQDSV (163 aa)). A disordered region spans residues 1002–1045 (NHLLLNGGSQKPTQSQVHRPPGSGGRQTREPRQEPANSPTSKMK). Residues 1008 to 1018 (GGSQKPTQSQV) are compositionally biased toward polar residues.

It belongs to the TMEM132 family.

The protein resides in the membrane. In Mus musculus (Mouse), this protein is Transmembrane protein 132C (Tmem132c).